A 164-amino-acid chain; its full sequence is Vasopressin-neurophysin 2-copeptin (164 aa).

An N-terminal signal peptide occupies residues 1–19 (MPDTMLPACFLGLLAFSSA). The cysteines at positions 20 and 25 are disulfide-linked. G28 is subject to Glycine amide. 7 cysteine pairs are disulfide-bonded: C41-C85, C44-C58, C52-C75, C59-C65, C92-C104, C98-C116, and C105-C110. The N-linked (GlcNAc...) asparagine glycan is linked to N131.

This sequence belongs to the vasopressin/oxytocin family. As to quaternary structure, interacts with vasopressin receptors V1bR/AVPR1B (Ki=85 pM), V1aR/AVPR1A (Ki=0.6 nM) and V2R/AVPR2 (Ki=4.9 nM). Interacts with oxytocin receptor (OXTR) (Ki=110 nM). In terms of assembly, (Microbial infection) May interact with SARS coronavirus-2/SARS-CoV-2; they may form a complex with secreted ACE2.

The protein resides in the secreted. Specifically binds vasopressin. In terms of biological role, has a direct antidiuretic action on the kidney, it also causes vasoconstriction of the peripheral vessels. Acts by binding to vasopressin receptors (V1bR/AVPR1B, V1aR/AVPR1A, and V2R/AVPR2). This is Vasopressin-neurophysin 2-copeptin (AVP) from Homo sapiens (Human).